The sequence spans 382 residues: Trophoblast glycoprotein-like (382 aa).

A signal peptide spans 1–26; the sequence is MAPRAGQPGLQGLLLVAAALSQPAAP. 2 disulfides stabilise this stretch: C27-C33 and C31-C43. Residues 27–307 lie on the Extracellular side of the membrane; it reads CPFQCYCFGG…EAAGPELEAS (281 aa). LRR repeat units follow at residues 57–80, 93–116, 117–140, 171–194, and 196–217; these read PPDA…AFAG, LPLL…AFDG, LPSL…AFRG, LAEL…ALRL, and RLEQ…ELRA. N62 is a glycosylation site (N-linked (GlcNAc...) asparagine). 2 disulfides stabilise this stretch: C238/C264 and C240/C285. The chain crosses the membrane as a helical span at residues 308–328; sequence YVFFGLVLALIGLIFLMVLYL. The Cytoplasmic portion of the chain corresponds to 329–382; sequence NRRGIQRWMRNLREACRDQMEGYHYRYEQDADPRRAPAPAAPAGSRATSPGSGL. Positions 358–382 are disordered; that stretch reads DADPRRAPAPAAPAGSRATSPGSGL. A compositionally biased stretch (low complexity) spans 365–382; sequence PAPAAPAGSRATSPGSGL.

The protein localises to the membrane. This chain is Trophoblast glycoprotein-like (TPBGL), found in Homo sapiens (Human).